Reading from the N-terminus, the 282-residue chain is Small ribosomal subunit protein uS2 (282 aa).

The tract at residues 260 to 282 (KRRRSKVYKEEEREVVTNEDESR) is disordered. The segment covering 266 to 282 (VYKEEEREVVTNEDESR) has biased composition (basic and acidic residues).

The protein belongs to the universal ribosomal protein uS2 family.

The sequence is that of Small ribosomal subunit protein uS2 from Wolbachia sp. subsp. Drosophila simulans (strain wRi).